Consider the following 134-residue polypeptide: Profilin-1 (134 aa).

This sequence belongs to the profilin family. Occurs in many kinds of cells as a complex with monomeric actin in a 1:1 ratio.

The protein resides in the cytoplasm. It localises to the cytoskeleton. Binds to actin and affects the structure of the cytoskeleton. At high concentrations, profilin prevents the polymerization of actin, whereas it enhances it at low concentrations. By binding to PIP2, it inhibits the formation of IP3 and DG. In Nicotiana tabacum (Common tobacco), this protein is Profilin-1 (PRO1).